The sequence spans 73 residues: ATP synthase subunit 9, mitochondrial (73 aa).

The next 2 helical transmembrane spans lie at 12 to 32 and 50 to 70; these read VAALGLIGAGIGVGIVFAALI and ILGFALSEATGLFALMVSFLL.

The protein belongs to the ATPase C chain family. In terms of assembly, F-type ATPases have 2 components, CF(1) - the catalytic core - and CF(0) - the membrane proton channel. CF(1) has five subunits: alpha(3), beta(3), gamma(1), delta(1), epsilon(1). CF(0) has three main subunits: a, b and c.

The protein resides in the mitochondrion inner membrane. Mitochondrial membrane ATP synthase (F(1)F(0) ATP synthase or Complex V) produces ATP from ADP in the presence of a proton gradient across the membrane which is generated by electron transport complexes of the respiratory chain. F-type ATPases consist of two structural domains, F(1) - containing the extramembraneous catalytic core and F(0) - containing the membrane proton channel, linked together by a central stalk and a peripheral stalk. During catalysis, ATP synthesis in the catalytic domain of F(1) is coupled via a rotary mechanism of the central stalk subunits to proton translocation. Part of the complex F(0) domain. A homomeric c-ring of probably 10 subunits is part of the complex rotary element. This chain is ATP synthase subunit 9, mitochondrial (ATP9), found in Mycosarcoma maydis (Corn smut fungus).